The chain runs to 66 residues: Metallothionein-like protein type 3 (66 aa).

Belongs to the metallothionein superfamily. Type 15 family.

In terms of biological role, metallothioneins have a high content of cysteine residues that bind various heavy metals. The protein is Metallothionein-like protein type 3 (MT2) of Malus domestica (Apple).